The chain runs to 334 residues: Glycerol-3-phosphate dehydrogenase [NAD(P)+] (334 aa).

Residues Trp14, Arg34, and Lys107 each contribute to the NADPH site. Sn-glycerol 3-phosphate contacts are provided by Lys107 and Gly135. NADPH is bound at residue Ala139. Residues Lys190, Asp243, Ser253, Arg254, and Asn255 each contribute to the sn-glycerol 3-phosphate site. The active-site Proton acceptor is Lys190. NADPH is bound at residue Arg254. Residues Val272 and Glu273 each contribute to the NADPH site.

Belongs to the NAD-dependent glycerol-3-phosphate dehydrogenase family.

It localises to the cytoplasm. The enzyme catalyses sn-glycerol 3-phosphate + NAD(+) = dihydroxyacetone phosphate + NADH + H(+). It catalyses the reaction sn-glycerol 3-phosphate + NADP(+) = dihydroxyacetone phosphate + NADPH + H(+). The protein operates within membrane lipid metabolism; glycerophospholipid metabolism. Its function is as follows. Catalyzes the reduction of the glycolytic intermediate dihydroxyacetone phosphate (DHAP) to sn-glycerol 3-phosphate (G3P), the key precursor for phospholipid synthesis. The sequence is that of Glycerol-3-phosphate dehydrogenase [NAD(P)+] from Neorickettsia sennetsu (strain ATCC VR-367 / Miyayama) (Ehrlichia sennetsu).